Reading from the N-terminus, the 603-residue chain is Penicillin-binding protein activator LpoA (603 aa).

The first 26 residues, Met1–Ala26, serve as a signal peptide directing secretion. Cys27 carries the N-palmitoyl cysteine lipid modification. The S-diacylglycerol cysteine moiety is linked to residue Cys27.

Belongs to the LpoA family. In terms of assembly, interacts with PBP1a.

It localises to the cell outer membrane. Regulator of peptidoglycan synthesis that is essential for the function of penicillin-binding protein 1A (PBP1a). The sequence is that of Penicillin-binding protein activator LpoA from Aliivibrio fischeri (strain ATCC 700601 / ES114) (Vibrio fischeri).